The following is a 173-amino-acid chain: Inorganic pyrophosphatase (173 aa).

Residues K28, R42, and Y54 each contribute to the substrate site. 3 residues coordinate Mg(2+): D64, D69, and D101. Y140 provides a ligand contact to substrate.

It belongs to the PPase family. As to quaternary structure, homohexamer. Mg(2+) is required as a cofactor.

It localises to the cytoplasm. The catalysed reaction is diphosphate + H2O = 2 phosphate + H(+). In terms of biological role, catalyzes the hydrolysis of inorganic pyrophosphate (PPi) forming two phosphate ions. This chain is Inorganic pyrophosphatase, found in Helicobacter pylori (strain ATCC 700392 / 26695) (Campylobacter pylori).